Consider the following 199-residue polypeptide: Chaperone protein TorD (199 aa).

Belongs to the TorD/DmsD family. TorD subfamily.

The protein resides in the cytoplasm. In terms of biological role, involved in the biogenesis of TorA. Acts on TorA before the insertion of the molybdenum cofactor and, as a result, probably favors a conformation of the apoenzyme that is competent for acquiring the cofactor. This Shigella boydii serotype 18 (strain CDC 3083-94 / BS512) protein is Chaperone protein TorD.